A 180-amino-acid chain; its full sequence is MVPRLKEKYEKEVIPALMEKFQYKNIMEVPKLEKIVINMGVGEAKENQKVLESAVADMQLISGQKPILTRAKKSVANFKIRENMPIGCKVTLRKNKMFEFADKLMNVALPRVRDFRGVSSKSFDGRGNYALGIKEQLIFPEVEYDKIDKVRGMDVIFVTNAKTDEEARELLRFLGMPFAQ.

It belongs to the universal ribosomal protein uL5 family. In terms of assembly, part of the 50S ribosomal subunit; part of the 5S rRNA/L5/L18/L25 subcomplex. Contacts the 5S rRNA and the P site tRNA. Forms a bridge to the 30S subunit in the 70S ribosome.

Its function is as follows. This is one of the proteins that bind and probably mediate the attachment of the 5S RNA into the large ribosomal subunit, where it forms part of the central protuberance. In the 70S ribosome it contacts protein S13 of the 30S subunit (bridge B1b), connecting the 2 subunits; this bridge is implicated in subunit movement. Contacts the P site tRNA; the 5S rRNA and some of its associated proteins might help stabilize positioning of ribosome-bound tRNAs. The sequence is that of Large ribosomal subunit protein uL5 from Clostridium acetobutylicum (strain ATCC 824 / DSM 792 / JCM 1419 / IAM 19013 / LMG 5710 / NBRC 13948 / NRRL B-527 / VKM B-1787 / 2291 / W).